Here is a 287-residue protein sequence, read N- to C-terminus: Bifunctional protein FolD (287 aa).

Residues 166–168 (GAS) and Ile232 contribute to the NADP(+) site.

This sequence belongs to the tetrahydrofolate dehydrogenase/cyclohydrolase family. As to quaternary structure, homodimer.

It catalyses the reaction (6R)-5,10-methylene-5,6,7,8-tetrahydrofolate + NADP(+) = (6R)-5,10-methenyltetrahydrofolate + NADPH. It carries out the reaction (6R)-5,10-methenyltetrahydrofolate + H2O = (6R)-10-formyltetrahydrofolate + H(+). Its pathway is one-carbon metabolism; tetrahydrofolate interconversion. Catalyzes the oxidation of 5,10-methylenetetrahydrofolate to 5,10-methenyltetrahydrofolate and then the hydrolysis of 5,10-methenyltetrahydrofolate to 10-formyltetrahydrofolate. The sequence is that of Bifunctional protein FolD from Pectobacterium carotovorum subsp. carotovorum (strain PC1).